The chain runs to 166 residues: Transcriptional repressor NrdR (166 aa).

A zinc finger lies at 3-34 (CPFCHFVETDVIDTRKLYEGEVIRRRRRCRAC). In terms of domain architecture, ATP-cone spans 49–139 (LMVVKKDGTR…VYRAFTDIGK (91 aa)).

It belongs to the NrdR family. The cofactor is Zn(2+).

Negatively regulates transcription of bacterial ribonucleotide reductase nrd genes and operons by binding to NrdR-boxes. In Chloroflexus aurantiacus (strain ATCC 29364 / DSM 637 / Y-400-fl), this protein is Transcriptional repressor NrdR.